The primary structure comprises 860 residues: Probable beta-glucosidase A (860 aa).

The first 19 residues, 1 to 19, serve as a signal peptide directing secretion; sequence MRFTSIEAVALTAVSLASA. N-linked (GlcNAc...) asparagine glycosylation is found at Asn61, Asn211, and Asn252. Asp280 is an active-site residue. Residues Asn315, Asn322, Asn354, Asn387, Asn442, Asn523, Asn542, Asn564, Asn658, Asn690, and Asn712 are each glycosylated (N-linked (GlcNAc...) asparagine).

Belongs to the glycosyl hydrolase 3 family.

Its subcellular location is the secreted. It carries out the reaction Hydrolysis of terminal, non-reducing beta-D-glucosyl residues with release of beta-D-glucose.. It functions in the pathway glycan metabolism; cellulose degradation. Functionally, beta-glucosidases are one of a number of cellulolytic enzymes involved in the degradation of cellulosic biomass. Catalyzes the last step releasing glucose from the inhibitory cellobiose. The polypeptide is Probable beta-glucosidase A (bglA) (Aspergillus niger (strain ATCC MYA-4892 / CBS 513.88 / FGSC A1513)).